Reading from the N-terminus, the 542-residue chain is Protein GDAP2 homolog (542 aa).

Positions arginine 58–phenylalanine 237 constitute a Macro domain. A disordered region spans residues proline 277–serine 304. Basic and acidic residues predominate over residues glycine 286 to glutamate 300. The region spanning glutamine 373–asparagine 530 is the CRAL-TRIO domain.

The protein belongs to the GDAP2 family.

In Drosophila pseudoobscura pseudoobscura (Fruit fly), this protein is Protein GDAP2 homolog.